A 75-amino-acid polypeptide reads, in one-letter code: MESTISLKVNKGKGKGSKGASSSDDKSKFDVVKEWTNWSLKKAKVVTHYGFIPLVIFVGMNSDPKPHLFQLLSPV.

N-acetylmethionine is present on methionine 1. The interval 1 to 28 (MESTISLKVNKGKGKGSKGASSSDDKSK) is disordered. Topologically, residues 1-46 (MESTISLKVNKGKGKGSKGASSSDDKSKFDVVKEWTNWSLKKAKVV) are cytoplasmic. A helical transmembrane segment spans residues 47-64 (THYGFIPLVIFVGMNSDP). Topologically, residues 65–75 (KPHLFQLLSPV) are mitochondrial intermembrane.

Belongs to the Tom7 family. As to quaternary structure, forms part of the preprotein translocase complex of the outer mitochondrial membrane (TOM complex) which consists of at least 6 different proteins (TOM5, TOM6, TOM7, TOM20, TOM22/TOM9 and TOM40). As to expression, expressed in roots, flowers, young cotyledons and leaves.

The protein resides in the mitochondrion outer membrane. Its function is as follows. Seems to act as a modulator of the dynamics of the mitochondrial protein transport machinery. Seems to promote the dissociation of subunits of the outer membrane translocase. This chain is Mitochondrial import receptor subunit TOM7-1 (TOM7-1), found in Arabidopsis thaliana (Mouse-ear cress).